The primary structure comprises 356 residues: GDP-mannose:di-myo-inositol-1,3'-phosphate beta-1,2-mannosyltransferase (356 aa).

This sequence belongs to the MDIP synthase family. Requires Mg(2+) as cofactor.

It carries out the reaction bis(myo-inositol) 1,3'-phosphate + GDP-alpha-D-mannose = 2-O-(beta-D-mannosyl)-bis(myo-inositol) 1,3'-phosphate + GDP + H(+). The catalysed reaction is 2-O-(beta-D-mannosyl)-bis(myo-inositol) 1,3'-phosphate + GDP-alpha-D-mannose = 2-O-(beta-D-mannosyl-(1-&gt;2)-beta-D-mannosyl)-bis(myo-inositol) 1,3'-phosphate + GDP + H(+). It catalyses the reaction bis(myo-inositol) 1,3'-phosphate + 2 GDP-alpha-D-mannose = 2-O-(beta-D-mannosyl-(1-&gt;2)-beta-D-mannosyl)-bis(myo-inositol) 1,3'-phosphate + 2 GDP + 2 H(+). Its function is as follows. Catalyzes the transfer of the mannosyl group from GDP-mannose to di-myo-inositol-1,3'-phosphate (DIP), producing mannosyl-di-myo-inositol phosphate (MDIP). Can also use MDIP as an acceptor of a second mannose residue, yielding di-mannosyl-di-myo-inositol phosphate (MMDIP). Minor amounts of the tri-mannosylated form are also formed. The polypeptide is GDP-mannose:di-myo-inositol-1,3'-phosphate beta-1,2-mannosyltransferase (Thermotoga maritima (strain ATCC 43589 / DSM 3109 / JCM 10099 / NBRC 100826 / MSB8)).